We begin with the raw amino-acid sequence, 1337 residues long: uncharacterized protein (1337 aa).

2 disordered regions span residues 1 to 94 (MPTS…QSSA) and 119 to 174 (ARDI…PSFF). Composition is skewed to low complexity over residues 18–37 (SNTSSTESSSSNNSSTASGS) and 68–79 (SSTHFQSSHSVS). Residues 80 to 94 (NAHNQSPLNQSQSSA) are compositionally biased toward polar residues. A compositionally biased stretch (low complexity) spans 123 to 147 (PQQPSHSQNPSSSSSSSSSQSSQHS). The span at 157–167 (NEKKSLDDPSP) shows a compositional bias: basic and acidic residues. 6 helical membrane passes run 209 to 229 (GLKPVIRAAINSWIAFLLVLA), 241 to 261 (FFVVITSILVPAMEPIAPMLW), 267 to 287 (FLLLFSAYAWTVLAAKLATVA), 328 to 348 (VRPLPSIIWALFEFSAVALFI), 361 to 381 (CVFSIICTAVSANMGPMYPYF), and 387 to 407 (LFFIVPNCVQTGITIGCTLFI). Disordered regions lie at residues 623–662 (SHVRTGSNNSEAPLAAKTSTTKRNGDLLEPQSPSLRSHKS) and 868–894 (YDENIHNDVDKDMNQSSTQPRDPDADH). The span at 626–644 (RTGSNNSEAPLAAKTSTTK) shows a compositional bias: polar residues. The segment covering 868–880 (YDENIHNDVDKDM) has biased composition (basic and acidic residues). 6 helical membrane-spanning segments follow: residues 917 to 937 (MNVFVLKVGTLAVICTIPAFC), 975 to 995 (IFGTFFGAILGMVIWYTGSGH), 997 to 1017 (LGNAYGLAAVWGAAIPFIQFI), 1021 to 1041 (FVILTPMPAVIFCVTAALTVT), 1066 to 1086 (FLTVAAGITVAFIFSFLPQPR), and 1275 to 1295 (FAVGCTIAYAVVNHIDRIMFI).

It is found in the membrane. This is an uncharacterized protein from Schizosaccharomyces pombe (strain 972 / ATCC 24843) (Fission yeast).